A 237-amino-acid polypeptide reads, in one-letter code: Phosphoribosylaminoimidazole-succinocarboxamide synthase (237 aa).

It belongs to the SAICAR synthetase family.

It catalyses the reaction 5-amino-1-(5-phospho-D-ribosyl)imidazole-4-carboxylate + L-aspartate + ATP = (2S)-2-[5-amino-1-(5-phospho-beta-D-ribosyl)imidazole-4-carboxamido]succinate + ADP + phosphate + 2 H(+). The protein operates within purine metabolism; IMP biosynthesis via de novo pathway; 5-amino-1-(5-phospho-D-ribosyl)imidazole-4-carboxamide from 5-amino-1-(5-phospho-D-ribosyl)imidazole-4-carboxylate: step 1/2. This Escherichia coli O7:K1 (strain IAI39 / ExPEC) protein is Phosphoribosylaminoimidazole-succinocarboxamide synthase.